A 78-amino-acid chain; its full sequence is Translation initiation factor IF-1 (78 aa).

One can recognise an S1-like domain in the interval 1-72 (MAKEAEMEFE…TRGRITYRKI (72 aa)).

Belongs to the IF-1 family. As to quaternary structure, component of the 30S ribosomal translation pre-initiation complex which assembles on the 30S ribosome in the order IF-2 and IF-3, IF-1 and N-formylmethionyl-tRNA(fMet); mRNA recruitment can occur at any time during PIC assembly.

It is found in the cytoplasm. Functionally, one of the essential components for the initiation of protein synthesis. Stabilizes the binding of IF-2 and IF-3 on the 30S subunit to which N-formylmethionyl-tRNA(fMet) subsequently binds. Helps modulate mRNA selection, yielding the 30S pre-initiation complex (PIC). Upon addition of the 50S ribosomal subunit IF-1, IF-2 and IF-3 are released leaving the mature 70S translation initiation complex. The polypeptide is Translation initiation factor IF-1 (Mesoplasma florum (strain ATCC 33453 / NBRC 100688 / NCTC 11704 / L1) (Acholeplasma florum)).